We begin with the raw amino-acid sequence, 340 residues long: Phospho-N-acetylmuramoyl-pentapeptide-transferase (340 aa).

The next 10 helical transmembrane spans lie at 5–25 (FILS…HLIN), 50–70 (TPTM…IIWT), 73–93 (SNPY…IGFI), 113–133 (FSLL…IIND), 147–167 (IIFN…IGTS), 178–198 (GLAI…SFIS), 218–238 (LTII…FNTY), 242–262 (IFMG…ISVL), 267–287 (ILLI…IIQV), and 318–338 (IIRF…MLKV).

This sequence belongs to the glycosyltransferase 4 family. MraY subfamily. Mg(2+) serves as cofactor.

It localises to the cell membrane. The enzyme catalyses UDP-N-acetyl-alpha-D-muramoyl-L-alanyl-gamma-D-glutamyl-meso-2,6-diaminopimeloyl-D-alanyl-D-alanine + di-trans,octa-cis-undecaprenyl phosphate = di-trans,octa-cis-undecaprenyl diphospho-N-acetyl-alpha-D-muramoyl-L-alanyl-D-glutamyl-meso-2,6-diaminopimeloyl-D-alanyl-D-alanine + UMP. It functions in the pathway cell wall biogenesis; peptidoglycan biosynthesis. Functionally, catalyzes the initial step of the lipid cycle reactions in the biosynthesis of the cell wall peptidoglycan: transfers peptidoglycan precursor phospho-MurNAc-pentapeptide from UDP-MurNAc-pentapeptide onto the lipid carrier undecaprenyl phosphate, yielding undecaprenyl-pyrophosphoryl-MurNAc-pentapeptide, known as lipid I. The sequence is that of Phospho-N-acetylmuramoyl-pentapeptide-transferase from Buchnera aphidicola subsp. Baizongia pistaciae (strain Bp).